The primary structure comprises 200 residues: Ciliary neurotrophic factor (200 aa).

The protein belongs to the CNTF family. Homodimer. In terms of tissue distribution, nervous system.

It localises to the cytoplasm. Functionally, CNTF is a survival factor for various neuronal cell types. Seems to prevent the degeneration of motor axons after axotomy. The chain is Ciliary neurotrophic factor (CNTF) from Homo sapiens (Human).